The sequence spans 271 residues: Tryptophan synthase alpha chain (271 aa).

Catalysis depends on proton acceptor residues glutamate 49 and aspartate 60.

It belongs to the TrpA family. Tetramer of two alpha and two beta chains.

It catalyses the reaction (1S,2R)-1-C-(indol-3-yl)glycerol 3-phosphate + L-serine = D-glyceraldehyde 3-phosphate + L-tryptophan + H2O. The protein operates within amino-acid biosynthesis; L-tryptophan biosynthesis; L-tryptophan from chorismate: step 5/5. In terms of biological role, the alpha subunit is responsible for the aldol cleavage of indoleglycerol phosphate to indole and glyceraldehyde 3-phosphate. The protein is Tryptophan synthase alpha chain of Burkholderia cenocepacia (strain ATCC BAA-245 / DSM 16553 / LMG 16656 / NCTC 13227 / J2315 / CF5610) (Burkholderia cepacia (strain J2315)).